Reading from the N-terminus, the 172-residue chain is NADH-ubiquinone oxidoreductase chain 6 (172 aa).

The next 5 membrane-spanning stretches (helical) occupy residues 1–21 (MTYFMFLLLMALVVGLVAVAS), 25–45 (PYFAALGLVVAAGVGCGVLVG), 53–73 (LVLFLIYLGGMLVVFAYAALA), 86–106 (VLGYVLVYLLGVGLVAGIFWG), and 140–160 (GGMLVICAWVLLLTLLVVLEL).

This sequence belongs to the complex I subunit 6 family.

Its subcellular location is the mitochondrion membrane. The enzyme catalyses a ubiquinone + NADH + 5 H(+)(in) = a ubiquinol + NAD(+) + 4 H(+)(out). Its function is as follows. Core subunit of the mitochondrial membrane respiratory chain NADH dehydrogenase (Complex I) that is believed to belong to the minimal assembly required for catalysis. Complex I functions in the transfer of electrons from NADH to the respiratory chain. The immediate electron acceptor for the enzyme is believed to be ubiquinone. The protein is NADH-ubiquinone oxidoreductase chain 6 (MT-ND6) of Cyprinus carpio (Common carp).